The sequence spans 620 residues: Probable potassium transport system protein Kup (620 aa).

The next 12 helical transmembrane spans lie at 8–28 (VGLL…SPLY), 50–70 (VLSL…VILI), 102–122 (MLLG…TPAI), 136–156 (PDLK…LFAI), 168–188 (FGPV…ANIV), 211–231 (LMSF…EALY), 246–266 (WFSL…ALLI), 284–304 (MVMP…QAVI), 336–356 (IYVP…VIGF), 368–388 (IAVT…MALL), 393–413 (MALV…YFAA), and 415–435 (IIKV…SFTV).

The protein belongs to the HAK/KUP transporter (TC 2.A.72) family.

It localises to the cell inner membrane. The enzyme catalyses K(+)(in) + H(+)(in) = K(+)(out) + H(+)(out). Its function is as follows. Transport of potassium into the cell. Likely operates as a K(+):H(+) symporter. This Rhodopseudomonas palustris (strain HaA2) protein is Probable potassium transport system protein Kup.